The primary structure comprises 185 residues: Probable chorismate pyruvate-lyase 1 (185 aa).

Arg-68, Leu-106, and Glu-164 together coordinate substrate.

Belongs to the UbiC family.

The protein resides in the cytoplasm. The catalysed reaction is chorismate = 4-hydroxybenzoate + pyruvate. It participates in cofactor biosynthesis; ubiquinone biosynthesis. Removes the pyruvyl group from chorismate, with concomitant aromatization of the ring, to provide 4-hydroxybenzoate (4HB) for the ubiquinone pathway. The chain is Probable chorismate pyruvate-lyase 1 from Pseudomonas entomophila (strain L48).